Reading from the N-terminus, the 911-residue chain is General transcription factor 3C polypeptide 2 (911 aa).

Disordered stretches follow at residues 24 to 187 (DSPG…RRRA) and 205 to 297 (ALPA…MAPN). Residues 35-46 (DVKTSSEMTSAE) show a composition bias toward polar residues. Serine 63 is subject to Phosphoserine. Over residues 64–81 (PDQRRLPPEQESLSRLEQ) the composition is skewed to basic and acidic residues. A compositionally biased stretch (basic residues) spans 92–112 (SKPRASKPGRKRGGRTRKGPK). Over residues 114–123 (PQQPNPPSAP) the composition is skewed to pro residues. Serine 132, serine 165, serine 167, serine 220, and serine 260 each carry phosphoserine. Over residues 253 to 262 (EAEDVEESEG) the composition is skewed to acidic residues. The segment covering 263 to 277 (PSESSSEPEPVVPRS) has biased composition (low complexity). WD repeat units follow at residues 366-426 (PEDG…MNET), 427-483 (HPLS…AWEL), 484-535 (PGTP…IYKV), 536-603 (QCVA…SLKL), 604-654 (YPFQ…NSIK), and 655-690 (RFLS…HYID). Serine 597 bears the Phosphoserine mark. The tract at residues 765–785 (SPEGPDHSSASSGVPNPPKAR) is disordered. 3 positions are modified to phosphoserine: serine 871, serine 892, and serine 893. Residues 889–911 (FQPSSPTRRPGFSPTSHRLLPTP) are disordered. Threonine 895 carries the phosphothreonine modification. Serine 901 is modified (phosphoserine).

Part of the TFIIIC subcomplex TFIIIC2, consisting of six subunits, GTF3C1, GTF3C2, GTF3C3, GTF3C4, GTF3C5 and GTF3C6.

It is found in the nucleus. Required for RNA polymerase III-mediated transcription. Component of TFIIIC that initiates transcription complex assembly on tRNA and is required for transcription of 5S rRNA and other stable nuclear and cytoplasmic RNAs. May play a direct role in stabilizing interactions of TFIIIC2 with TFIIIC1. The polypeptide is General transcription factor 3C polypeptide 2 (GTF3C2) (Homo sapiens (Human)).